We begin with the raw amino-acid sequence, 363 residues long: Peptide-N(4)-(N-acetyl-beta-glucosaminyl)asparagine amidase (363 aa).

Zn(2+)-binding residues include Cys129, Cys132, Cys165, and Cys168. The active-site Nucleophile is the Cys191. Residues His218 and Asp235 contribute to the active site. A substrate-binding site is contributed by Glu238. The tract at residues 325–363 (RGKTQETKSESVSAASKSSNRGRESGSADWKAQRGEDGK) is disordered. The segment covering 334–343 (ESVSAASKSS) has biased composition (low complexity). Basic and acidic residues predominate over residues 345-363 (RGRESGSADWKAQRGEDGK).

This sequence belongs to the transglutaminase-like superfamily. PNGase family. As to quaternary structure, interacts with RAD23 subunit of 26S proteasome. Requires Zn(2+) as cofactor.

It localises to the cytoplasm. It is found in the nucleus. The catalysed reaction is Hydrolysis of an N(4)-(acetyl-beta-D-glucosaminyl)asparagine residue in which the glucosamine residue may be further glycosylated, to yield a (substituted) N-acetyl-beta-D-glucosaminylamine and a peptide containing an aspartate residue.. Its activity is regulated as follows. Inhibited by Z-VAD-fmk, a well-known caspase inhibitor. Also inhibited by Man9GlcNAc2-iodoacetoamide. Both molecules inhibit enzyme activity through covalent binding of the carbohydrate to the single Cys-191 residue. Its function is as follows. Specifically deglycosylates the denatured form of N-linked glycoproteins in the cytoplasm and assists their proteasome-mediated degradation. Cleaves the beta-aspartyl-glucosamine (GlcNAc) of the glycan and the amide side chain of Asn, converting Asn to Asp. Prefers proteins containing high-mannose over those bearing complex type oligosaccharides. Can recognize misfolded proteins in the endoplasmic reticulum that are exported to the cytosol to be destroyed and deglycosylate them, while it has no activity toward native proteins. Deglycosylation is a prerequisite for subsequent proteasome-mediated degradation of some, but not all, misfolded glycoproteins. Involved in the formation of free oligosaccharide in cytosol. In Saccharomyces cerevisiae (strain ATCC 204508 / S288c) (Baker's yeast), this protein is Peptide-N(4)-(N-acetyl-beta-glucosaminyl)asparagine amidase (PNG1).